The sequence spans 423 residues: Imidazolonepropionase (423 aa).

Fe(3+) contacts are provided by His-80 and His-82. Positions 80 and 82 each coordinate Zn(2+). 3 residues coordinate 4-imidazolone-5-propanoate: Arg-89, Tyr-152, and His-185. Residue Tyr-152 participates in N-formimidoyl-L-glutamate binding. Residue His-250 participates in Fe(3+) binding. His-250 contacts Zn(2+). Gln-253 serves as a coordination point for 4-imidazolone-5-propanoate. Residue Asp-325 coordinates Fe(3+). A Zn(2+)-binding site is contributed by Asp-325. 2 residues coordinate N-formimidoyl-L-glutamate: Asn-327 and Gly-329. 4-imidazolone-5-propanoate is bound at residue Thr-330.

Belongs to the metallo-dependent hydrolases superfamily. HutI family. Zn(2+) is required as a cofactor. Fe(3+) serves as cofactor.

The protein localises to the cytoplasm. It carries out the reaction 4-imidazolone-5-propanoate + H2O = N-formimidoyl-L-glutamate. Its pathway is amino-acid degradation; L-histidine degradation into L-glutamate; N-formimidoyl-L-glutamate from L-histidine: step 3/3. Functionally, catalyzes the hydrolytic cleavage of the carbon-nitrogen bond in imidazolone-5-propanoate to yield N-formimidoyl-L-glutamate. It is the third step in the universal histidine degradation pathway. The chain is Imidazolonepropionase from Cupriavidus pinatubonensis (strain JMP 134 / LMG 1197) (Cupriavidus necator (strain JMP 134)).